The sequence spans 512 residues: Glycerol kinase, glycosomal (512 aa).

Thr11 contributes to the substrate binding site. Arg15 provides a ligand contact to ATP. Residues Arg84, Tyr139, and Asp254 each coordinate substrate. Residues Thr276, Gly321, and 422 to 426 (GLSKN) each bind ATP. The short motif at 510–512 (AKL) is the Microbody targeting signal element.

Belongs to the FGGY kinase family.

The protein resides in the glycosome. The catalysed reaction is glycerol + ATP = sn-glycerol 3-phosphate + ADP + H(+). It participates in polyol metabolism; glycerol degradation via glycerol kinase pathway; sn-glycerol 3-phosphate from glycerol: step 1/1. In terms of biological role, catalyzes the phosphorylation of glycerol using ATP. Under anoxic conditions, when glycerol 3-phosphate accumulates in the glycosome, it catalyzes the reverse reaction, maintaining the ATP balance. Key enzyme for the survival of bloodstream forms under anoxic conditions. In Trypanosoma brucei brucei, this protein is Glycerol kinase, glycosomal (GK).